A 223-amino-acid polypeptide reads, in one-letter code: Bone marrow proteoglycan (223 aa).

The first 16 residues, 1–16 (MKFPLLLALLVGGASA), serve as a signal peptide directing secretion. Positions 17 to 106 (LHLSSETSDS…TSLMGDSGCK (90 aa)) are cleaved as a propeptide — acidic. Residues 20-81 (SSETSDSKSP…PGDEGAVSGQ (62 aa)) form a disordered region. Thr23 carries O-linked (GalNAc...) threonine; partial glycosylation. An O-linked (GalNAc...) serine glycan is attached at Ser24. Ser66 carries O-linked (Xyl...) (chondroitin sulfate) serine glycosylation. One can recognise a C-type lectin domain in the interval 124–223 (SVCRRCYRGT…VKRRPFICSY (100 aa)). Intrachain disulfides connect Cys126-Cys221 and Cys198-Cys213.

Post-translationally, nitrated.

It is found in the secreted. Cytotoxin and helminthotoxin. MBP also induces non-cytolytic histamine release from basophils. It is involved in antiparasitic defense mechanisms and immune hypersensitivity reactions. The chain is Bone marrow proteoglycan (Prg2) from Mus musculus (Mouse).